A 460-amino-acid polypeptide reads, in one-letter code: MDETTVNGGRRASDVVVFAFPRHGHMSPMLQFSKRLVSKGLRVTFLITTSATESLRLNLPPSSSLDLQVISDVPESNDIATLEGYLRSFKATVSKTLADFIDGIGNPPKFIVYDSVMPWVQEVARGRGLDAAPFFTQSSAVNHILNHVYGGSLSIPAPENTAVSLPSMPVLQAEDLPAFPDDPEVVMNFMTSQFSNFQDAKWIFFNTFDQLECKKQSQVVNWMADRWPIKTVGPTIPSAYLDDGRLEDDRAFGLNLLKPEDGKNTRQWQWLDSKDTASVLYISFGSLAILQEEQVKELAYFLKDTNLSFLWVLRDSELQKLPHNFVQETSHRGLVVNWCSQLQVLSHRAVSCFVTHCGWNSTLEALSLGVPMVAIPQWVDQTTNAKFVADVWRVGVRVKKKDERIVTKEELEASIRQVVQGEGRNEFKHNAIKWKKLAKEAVDEGGSSDKNIEEFVKTIA.

Histidine 25 (proton acceptor) is an active-site residue. Aspartate 114 acts as the Charge relay in catalysis. Serine 286, cysteine 339, glutamine 341, tryptophan 359, asparagine 360, serine 361, glutamate 364, aspartate 380, and glutamine 381 together coordinate UDP-alpha-D-glucose.

The protein belongs to the UDP-glycosyltransferase family. Highly expressed in young fruits 15 days after anthesis (15-DAA).

It catalyses the reaction mogrol + UDP-alpha-D-glucose = mogroside IE + UDP + H(+). It carries out the reaction mogroside I-A1 + UDP-alpha-D-glucose = mogroside IIE + UDP + H(+). The catalysed reaction is mogroside II-A1 + UDP-alpha-D-glucose = mogroside IIIX + UDP + H(+). The enzyme catalyses mogroside II-A + UDP-alpha-D-glucose = mogroside III + UDP + H(+). It catalyses the reaction mogroside III-A1 + UDP-alpha-D-glucose = siamenoside I + UDP + H(+). It functions in the pathway secondary metabolite biosynthesis; terpenoid biosynthesis. Its function is as follows. UDP-glycosyltransferase involved in the biosynthesis of cucurbitacin and mogroside tetracyclic triterpene natural products (e.g. siamenoside I and mogrosides IV, V and VI). Cucurbitacins have cytotoxic properties and exhibit deterrent taste as a defense barrier against herbivores. Mogrosides are nonsugar highly oxygenated compounds used as high-intensity zero-calorie sweeteners; they also possess pharmacological properties such as regulating immunity, lowering blood sugar and lipid levels, protecting the liver, and acting as antioxidants and antitumor agents. Catalyzes the C3 primary glucosylation of mogrol, mogroside I-A1, mogroside II-A1, mogroside II-A and mogroside III-A1. This Siraitia grosvenorii (Monk's fruit) protein is Mogroside I-E synthase.